Consider the following 143-residue polypeptide: Transcriptional regulator MraZ (143 aa).

SpoVT-AbrB domains lie at 5 to 47 (EFLH…PMDE) and 76 to 119 (AIEC…ANDA).

Belongs to the MraZ family. As to quaternary structure, forms oligomers.

It localises to the cytoplasm. Its subcellular location is the nucleoid. The protein is Transcriptional regulator MraZ of Oceanobacillus iheyensis (strain DSM 14371 / CIP 107618 / JCM 11309 / KCTC 3954 / HTE831).